The following is a 281-amino-acid chain: Putative pyruvate, phosphate dikinase regulatory protein (281 aa).

153-160 (GISRTSKT) lines the ADP pocket.

It belongs to the pyruvate, phosphate/water dikinase regulatory protein family. PDRP subfamily.

The catalysed reaction is N(tele)-phospho-L-histidyl/L-threonyl-[pyruvate, phosphate dikinase] + ADP = N(tele)-phospho-L-histidyl/O-phospho-L-threonyl-[pyruvate, phosphate dikinase] + AMP + H(+). It catalyses the reaction N(tele)-phospho-L-histidyl/O-phospho-L-threonyl-[pyruvate, phosphate dikinase] + phosphate + H(+) = N(tele)-phospho-L-histidyl/L-threonyl-[pyruvate, phosphate dikinase] + diphosphate. Functionally, bifunctional serine/threonine kinase and phosphorylase involved in the regulation of the pyruvate, phosphate dikinase (PPDK) by catalyzing its phosphorylation/dephosphorylation. The protein is Putative pyruvate, phosphate dikinase regulatory protein of Bdellovibrio bacteriovorus (strain ATCC 15356 / DSM 50701 / NCIMB 9529 / HD100).